The chain runs to 466 residues: Signal recognition particle 54 kDa protein (466 aa).

GTP is bound by residues 104–111 (GLQGSGKT), 184–188 (DTAGR), and 242–245 (TKLD). The segment at 446 to 466 (QQQGGGGMGGLGGGGGLGPFG) is disordered. Residues 448–466 (QGGGGMGGLGGGGGLGPFG) are compositionally biased toward gly residues.

This sequence belongs to the GTP-binding SRP family. SRP54 subfamily. In terms of assembly, part of the signal recognition particle protein translocation system, which is composed of SRP and FtsY. Archaeal SRP consists of a 7S RNA molecule of 300 nucleotides and two protein subunits: SRP54 and SRP19.

It is found in the cytoplasm. It catalyses the reaction GTP + H2O = GDP + phosphate + H(+). Functionally, involved in targeting and insertion of nascent membrane proteins into the cytoplasmic membrane. Binds to the hydrophobic signal sequence of the ribosome-nascent chain (RNC) as it emerges from the ribosomes. The SRP-RNC complex is then targeted to the cytoplasmic membrane where it interacts with the SRP receptor FtsY. The protein is Signal recognition particle 54 kDa protein of Haloquadratum walsbyi (strain DSM 16790 / HBSQ001).